Consider the following 450-residue polypeptide: Dol-P-Glc:Glc(2)Man(9)GlcNAc(2)-PP-Dol alpha-1,2-glucosyltransferase (450 aa).

A helical transmembrane segment spans residues 12–32 (ISIISKYVAIVIFLIFVIIMF). A glycan (N-linked (GlcNAc...) asparagine) is linked at N34. The next 4 membrane-spanning stretches (helical) occupy residues 158–178 (YFLFYTDVSSTILIILSLGLI), 190–210 (ALVGFMSLWFRQTNIIWIAFI), 243–263 (LLGYIVNIILFVIFLKLNGGI), and 273–293 (IELHIVQVFYCFTFITFFTIP). N297 carries N-linked (GlcNAc...) asparagine glycosylation. Transmembrane regions (helical) follow at residues 312–332 (IILNLVIGLIIWYIMENFTIV), 357–377 (LKPLILMAYHFSSFQIISSLI), 384–404 (FIGIFSYLIAVGLTLIPSPLF), and 429–449 (FIWLNSINLITSYIFLHKGII).

It belongs to the ALG10 glucosyltransferase family.

Its subcellular location is the endoplasmic reticulum membrane. The catalysed reaction is an alpha-D-Glc-(1-&gt;3)-alpha-D-Glc-(1-&gt;3)-alpha-D-Man-(1-&gt;2)-alpha-D-Man-(1-&gt;2)-alpha-D-Man-(1-&gt;3)-[alpha-D-Man-(1-&gt;2)-alpha-D-Man-(1-&gt;3)-[alpha-D-Man-(1-&gt;2)-alpha-D-Man-(1-&gt;6)]-alpha-D-Man-(1-&gt;6)]-beta-D-Man-(1-&gt;4)-beta-D-GlcNAc-(1-&gt;4)-alpha-D-GlcNAc-diphospho-di-trans,poly-cis-dolichol + a di-trans,poly-cis-dolichyl beta-D-glucosyl phosphate = a alpha-D-Glc-(1-&gt;2)-alpha-D-Glc-(1-&gt;3)-alpha-D-Glc-(1-&gt;3)-alpha-D-Man-(1-&gt;2)-alpha-D-Man-(1-&gt;2)-alpha-D-Man-(1-&gt;3)-[alpha-D-Man-(1-&gt;2)-alpha-D-Man-(1-&gt;3)-[alpha-D-Man-(1-&gt;2)-alpha-D-Man-(1-&gt;6)]-alpha-D-Man-(1-&gt;6)]-beta-D-Man-(1-&gt;4)-beta-D-GlcNAc-(1-&gt;4)-alpha-D-GlcNAc-diphospho-di-trans,poly-cis-dolichol + a di-trans,poly-cis-dolichyl phosphate + H(+). It functions in the pathway protein modification; protein glycosylation. Its function is as follows. Dol-P-Glc:Glc(2)Man(9)GlcNAc(2)-PP-Dol alpha-1,2-glucosyltransferase that operates in the biosynthetic pathway of dolichol-linked oligosaccharides, the glycan precursors employed in protein asparagine (N)-glycosylation. The assembly of dolichol-linked oligosaccharides begins on the cytosolic side of the endoplasmic reticulum membrane and finishes in its lumen. The sequential addition of sugars to dolichol pyrophosphate produces dolichol-linked oligosaccharides containing fourteen sugars, including two GlcNAcs, nine mannoses and three glucoses. Once assembled, the oligosaccharide is transferred from the lipid to nascent proteins by oligosaccharyltransferases. In the lumen of the endoplasmic reticulum, adds the third and last glucose residue from dolichyl phosphate glucose (Dol-P-Glc) onto the lipid-linked oligosaccharide intermediate Glc(2)Man(9)GlcNAc(2)-PP-Dol to produce Glc(3)Man(9)GlcNAc(2)-PP-Dol. The polypeptide is Dol-P-Glc:Glc(2)Man(9)GlcNAc(2)-PP-Dol alpha-1,2-glucosyltransferase (DIE2) (Candida albicans (strain SC5314 / ATCC MYA-2876) (Yeast)).